Consider the following 314-residue polypeptide: Homoserine kinase (314 aa).

Position 95-105 (95-105 (PHSRGLGSSAS)) interacts with ATP.

It belongs to the GHMP kinase family. Homoserine kinase subfamily.

The protein resides in the cytoplasm. The catalysed reaction is L-homoserine + ATP = O-phospho-L-homoserine + ADP + H(+). The protein operates within amino-acid biosynthesis; L-threonine biosynthesis; L-threonine from L-aspartate: step 4/5. Functionally, catalyzes the ATP-dependent phosphorylation of L-homoserine to L-homoserine phosphate. The sequence is that of Homoserine kinase from Rhodococcus opacus (strain B4).